The sequence spans 704 residues: Polyribonucleotide nucleotidyltransferase (704 aa).

D485 and D491 together coordinate Mg(2+). The KH domain maps to 552-611; the sequence is PRIYTMKIDPKKIKDVIGKGGATIRALTEETGTSIDIDDDGTVKIAAVDGNAVKTVMARI. Residues 621 to 689 form the S1 motif domain; sequence GAVYTGKVTR…RQGRIRLTMR (69 aa).

The protein belongs to the polyribonucleotide nucleotidyltransferase family. As to quaternary structure, component of the RNA degradosome, which is a multiprotein complex involved in RNA processing and mRNA degradation. The cofactor is Mg(2+).

The protein localises to the cytoplasm. The enzyme catalyses RNA(n+1) + phosphate = RNA(n) + a ribonucleoside 5'-diphosphate. Functionally, involved in mRNA degradation. Catalyzes the phosphorolysis of single-stranded polyribonucleotides processively in the 3'- to 5'-direction. This chain is Polyribonucleotide nucleotidyltransferase, found in Mannheimia succiniciproducens (strain KCTC 0769BP / MBEL55E).